Consider the following 459-residue polypeptide: MMEFLKDFQKMGIYLAYNVNVDAIVYLNEKHIESLIKEFGAENIKKRIDEYPREINEPLDFVARLIHALKTGKPQAVPLVSYEADKWFNSRFKYDFERIGGQVGVIANLLANLDFNKVIAYSPLLGRKQAEMFVNRDNLLYPVVENGKLVLKKPLEAYREDDPVKINRIFEFRAGTKFKLGDETIEVPYSGRFIVACRFEDFARIETSPELKPYLPEIGEMVDGAILSGYQGLRRYYSDGKDANYYLRKAKEDIKLLKKKKDIKIHVEFASIQDRELRKKVIYNIFPLVDSVGMDEAEIAHILSVLGYRELSDRIFTYNRIEDAVLGAKILLDELNLEILQVHTIYYLMYITHNDNPLTEEELTKSLEVGTTLAAARAFLGDIKRPEDVKVGLNIPFNEKGEYVKLRFEEAKAKMRTREYKIVIIPTRLVRNPVSTVGLGDTISAGAFASYLSLLKRKE.

One can recognise an ADPK domain in the interval 1–457 (MMEFLKDFQK…FASYLSLLKR (457 aa)). Mg(2+)-binding residues include Glu268, Glu298, and Asp441. The active-site Proton acceptor is the Asp441.

Belongs to the carbohydrate kinase PfkC family. The cofactor is Mg(2+).

The protein resides in the cytoplasm. The catalysed reaction is beta-D-fructose 6-phosphate + ADP = beta-D-fructose 1,6-bisphosphate + AMP + H(+). Its pathway is carbohydrate degradation; glycolysis. Catalyzes the phosphorylation of fructose 6-phosphate to fructose 1,6-bisphosphate using ADP as the phosphate donor. This is ADP-specific phosphofructokinase from Thermococcus litoralis.